A 282-amino-acid polypeptide reads, in one-letter code: DNA-dependent metalloprotease WSS1 homolog 2 (282 aa).

In terms of domain architecture, Ubiquitin-like spans 1 to 75 (MELKFSCRGN…CLIRQDKDIV (75 aa)). One can recognise a WLM domain in the interval 99 to 274 (PHTTPKPASI…LLAAAERRKQ (176 aa)). His202 serves as a coordination point for Zn(2+). Residue Glu203 is part of the active site. Zn(2+) is bound by residues His206 and His212. A disordered region spans residues 234–282 (GKPGSYVSDRASYTPQQDNDDEDQKNHRRDLLLAAAERRKQSGSKVQKE). A compositionally biased stretch (basic and acidic residues) spans 269 to 282 (AERRKQSGSKVQKE).

The protein belongs to the peptidase M3 family. WSS1-like metalloprotease (WLM) subfamily. The cofactor is Zn(2+).

The protein localises to the cytoplasm. The protein resides in the nucleus. Its function is as follows. Metalloendopeptidase that acts selectively on DNA-binding proteins. DNA is needed to bring the protease and substrates together to enable proteolysis. Involved in the repair of toxic DNA-protein cross-links (DPCs) such as covalently trapped topoisomerase 1 (TOP1) adducts on DNA lesions or DPCs induced by reactive compounds such as formaldehyde. The chain is DNA-dependent metalloprotease WSS1 homolog 2 from Schizosaccharomyces pombe (strain 972 / ATCC 24843) (Fission yeast).